The chain runs to 334 residues: Type IV inositol polyphosphate 5-phosphatase 11 (334 aa).

Catalytic stretches follow at residues 206–222 (DLTV…QDVS) and 282–297 (KIRV…FKIQ).

Belongs to the inositol polyphosphate 5-phosphatase family. Expressed ubiquitously.

The protein resides in the cell membrane. It carries out the reaction a 1,2-diacyl-sn-glycero-3-phospho-(1D-myo-inositol-4,5-bisphosphate) + H2O = a 1,2-diacyl-sn-glycero-3-phospho-(1D-myo-inositol 4-phosphate) + phosphate. The enzyme catalyses a 1,2-diacyl-sn-glycero-3-phospho-(1D-myo-inositol-3,4,5-trisphosphate) + H2O = a 1,2-diacyl-sn-glycero-3-phospho-(1D-myo-inositol-3,4-bisphosphate) + phosphate. Its function is as follows. Has phosphatase activity toward PtdIns(4,5)P2, and in vitro toward PtdIns(3,5)P2 and PtdIns(3,4,5)P3. Cannot dephosphorylate PtdIns(5)P, Ins(1,4,5)P3 and Ins(1,3,4,5)P4. The protein is Type IV inositol polyphosphate 5-phosphatase 11 of Arabidopsis thaliana (Mouse-ear cress).